Reading from the N-terminus, the 195-residue chain is Probable DNA-directed RNA polymerase subunit delta (195 aa).

Positions 14–83 (LSMIEVARAI…GDNKWGLRSW (70 aa)) constitute an HTH HARE-type domain. 2 stretches are compositionally biased toward acidic residues: residues 120-138 (DSDA…DAYE) and 145-195 (YDDE…TSEE). Positions 120–195 (DSDAIDYNAD…SDDDAETSEE (76 aa)) are disordered.

The protein belongs to the RpoE family. RNAP is composed of a core of 2 alpha, a beta and a beta' subunits. The core is associated with a delta subunit and one of several sigma factors.

Functionally, participates in both the initiation and recycling phases of transcription. In the presence of the delta subunit, RNAP displays an increased specificity of transcription, a decreased affinity for nucleic acids, and an increased efficiency of RNA synthesis because of enhanced recycling. The sequence is that of Probable DNA-directed RNA polymerase subunit delta from Streptococcus pneumoniae serotype 2 (strain D39 / NCTC 7466).